We begin with the raw amino-acid sequence, 73 residues long: Protein kish (73 aa).

The N-terminal stretch at 1 to 21 is a signal peptide; sequence MTAIFNFESLLFVILLTICTC. Over 22–52 the chain is Lumenal; that stretch reads TYLHRQFPALLEKRKEGVTMVFWKCARIGER. Residues 53–73 form a helical membrane-spanning segment; sequence ASPYISLFCVFMALRFIFGSS.

Belongs to the KISH family.

The protein resides in the golgi apparatus membrane. The protein localises to the endoplasmic reticulum membrane. Involved in the early part of the secretory pathway. The polypeptide is Protein kish (ksh1) (Schizosaccharomyces pombe (strain 972 / ATCC 24843) (Fission yeast)).